Reading from the N-terminus, the 161-residue chain is DNA-directed RNA polymerase 18 kDa subunit (161 aa).

This sequence belongs to the poxviridae DNA-directed RNA polymerase 18 kDa subunit family. The DNA-dependent RNA polymerase used for intermediate and late genes expression consists of eight subunits Rpo30/OPG66, Rpo7/OPG90, Rpo22/OPG103, Rpo147/OPG105, Rpo18/OPG119, Rpo19/OPG131, Rpo132/OPG151 and Rpo35/OPG156. The same holoenzyme, with the addition of the transcription-specificity factor OPG109, is used for early gene expression. Apparently non-glycosylated.

It localises to the virion. It catalyses the reaction RNA(n) + a ribonucleoside 5'-triphosphate = RNA(n+1) + diphosphate. Functionally, part of the DNA-dependent RNA polymerase which catalyzes the transcription of viral DNA into RNA using the four ribonucleoside triphosphates as substrates. Responsible for the transcription of early, intermediate and late genes. DNA-dependent RNA polymerase associates with the early transcription factor (ETF), itself composed of OPG118 and OPG133, thereby allowing the early genes transcription. Late transcription, and probably also intermediate transcription, require newly synthesized RNA polymerase. This Cynomys gunnisoni (Gunnison's prairie dog) protein is DNA-directed RNA polymerase 18 kDa subunit (OPG119).